The primary structure comprises 215 residues: Triosephosphate isomerase (215 aa).

H82 serves as the catalytic Electrophile. E153 acts as the Proton acceptor in catalysis.

This sequence belongs to the triosephosphate isomerase family. Homodimer.

The catalysed reaction is D-glyceraldehyde 3-phosphate = dihydroxyacetone phosphate. It functions in the pathway carbohydrate biosynthesis; gluconeogenesis. The protein operates within carbohydrate degradation; glycolysis; D-glyceraldehyde 3-phosphate from glycerone phosphate: step 1/1. This Heliothis virescens (Tobacco budworm moth) protein is Triosephosphate isomerase (Tpi).